The following is a 217-amino-acid chain: Adenylate kinase (217 aa).

ATP is bound at residue Gly12–Ser17. The segment at Ser32–Val61 is NMP. AMP-binding positions include Thr33, Arg38, Leu59 to Val61, Gly87 to Arg90, and Gln94. Residues Gly128 to Asp165 are LID. Arg129 is an ATP binding site. 2 residues coordinate Zn(2+): Cys132 and Cys135. An ATP-binding site is contributed by Ile138–Tyr139. Residues Cys152 and Asp155 each contribute to the Zn(2+) site. AMP-binding residues include Arg162 and Arg173. Residue Gln201 participates in ATP binding.

It belongs to the adenylate kinase family. Monomer.

It is found in the cytoplasm. The catalysed reaction is AMP + ATP = 2 ADP. The protein operates within purine metabolism; AMP biosynthesis via salvage pathway; AMP from ADP: step 1/1. Its function is as follows. Catalyzes the reversible transfer of the terminal phosphate group between ATP and AMP. Plays an important role in cellular energy homeostasis and in adenine nucleotide metabolism. This is Adenylate kinase from Acholeplasma laidlawii (strain PG-8A).